A 49-amino-acid polypeptide reads, in one-letter code: Large ribosomal subunit protein bL33B (49 aa).

It belongs to the bacterial ribosomal protein bL33 family.

This chain is Large ribosomal subunit protein bL33B, found in Lactobacillus gasseri (strain ATCC 33323 / DSM 20243 / BCRC 14619 / CIP 102991 / JCM 1131 / KCTC 3163 / NCIMB 11718 / NCTC 13722 / AM63).